Consider the following 305-residue polypeptide: MSLLDWFANRRKTEPVVHDYQEREIADGLWTKCESCDALTYTKDLQANLMVCLQCGHHLRIYSDERIRQLIDPGTWQFLDEAVSPTDPLGFRDRKSYSDRLKETQANTGLSDAVRTGVGLLEGQPVALGVMDFRFMGGSMGSVVGEKLTRLIEKGTEQRSPVIIVCASGGARMQEGMLSLMQMAKISGALERHREAGLLYLPILTHPTTGGVTASFAMLGDLIIAEPKALIGFAGRRVIEQTLREKLPDDFQTAEYLQAHGFVDTIVPRTQLKKTLAQLIRLHQPQSPEMKLPLLESSSPATAPL.

One can recognise a CoA carboxyltransferase N-terminal domain in the interval 29–298 (LWTKCESCDA…EMKLPLLESS (270 aa)). Positions 33, 36, 52, and 55 each coordinate Zn(2+). The C4-type zinc-finger motif lies at 33-55 (CESCDALTYTKDLQANLMVCLQC).

This sequence belongs to the AccD/PCCB family. Acetyl-CoA carboxylase is a heterohexamer composed of biotin carboxyl carrier protein (AccB), biotin carboxylase (AccC) and two subunits each of ACCase subunit alpha (AccA) and ACCase subunit beta (AccD). Zn(2+) is required as a cofactor.

The protein resides in the cytoplasm. The enzyme catalyses N(6)-carboxybiotinyl-L-lysyl-[protein] + acetyl-CoA = N(6)-biotinyl-L-lysyl-[protein] + malonyl-CoA. It participates in lipid metabolism; malonyl-CoA biosynthesis; malonyl-CoA from acetyl-CoA: step 1/1. Component of the acetyl coenzyme A carboxylase (ACC) complex. Biotin carboxylase (BC) catalyzes the carboxylation of biotin on its carrier protein (BCCP) and then the CO(2) group is transferred by the transcarboxylase to acetyl-CoA to form malonyl-CoA. This chain is Acetyl-coenzyme A carboxylase carboxyl transferase subunit beta, found in Synechococcus sp. (strain ATCC 27144 / PCC 6301 / SAUG 1402/1) (Anacystis nidulans).